The following is a 322-amino-acid chain: NADH-ubiquinone oxidoreductase chain 1 (322 aa).

8 helical membrane passes run V4 to L24, Y73 to M93, L106 to A126, L150 to M170, F175 to A195, F224 to V244, F257 to V277, and I302 to F322.

Belongs to the complex I subunit 1 family.

The protein localises to the mitochondrion inner membrane. It carries out the reaction a ubiquinone + NADH + 5 H(+)(in) = a ubiquinol + NAD(+) + 4 H(+)(out). Core subunit of the mitochondrial membrane respiratory chain NADH dehydrogenase (Complex I) that is believed to belong to the minimal assembly required for catalysis. Complex I functions in the transfer of electrons from NADH to the respiratory chain. The immediate electron acceptor for the enzyme is believed to be ubiquinone. The sequence is that of NADH-ubiquinone oxidoreductase chain 1 (ND1) from Strongylocentrotus purpuratus (Purple sea urchin).